The chain runs to 231 residues: Large ribosomal subunit protein uL1 (231 aa).

It belongs to the universal ribosomal protein uL1 family. As to quaternary structure, part of the 50S ribosomal subunit.

Binds directly to 23S rRNA. The L1 stalk is quite mobile in the ribosome, and is involved in E site tRNA release. Functionally, protein L1 is also a translational repressor protein, it controls the translation of the L11 operon by binding to its mRNA. The chain is Large ribosomal subunit protein uL1 from Janthinobacterium sp. (strain Marseille) (Minibacterium massiliensis).